We begin with the raw amino-acid sequence, 123 residues long: Large ribosomal subunit protein bL12 (123 aa).

The protein belongs to the bacterial ribosomal protein bL12 family. In terms of assembly, homodimer. Part of the ribosomal stalk of the 50S ribosomal subunit. Forms a multimeric L10(L12)X complex, where L10 forms an elongated spine to which 2 to 4 L12 dimers bind in a sequential fashion. Binds GTP-bound translation factors.

Its function is as follows. Forms part of the ribosomal stalk which helps the ribosome interact with GTP-bound translation factors. Is thus essential for accurate translation. This is Large ribosomal subunit protein bL12 from Bartonella quintana (strain Toulouse) (Rochalimaea quintana).